The sequence spans 437 residues: tRNA-2-methylthio-N(6)-dimethylallyladenosine synthase (437 aa).

Positions 3-120 (RKLFIETHGC…LPEMIDAART (118 aa)) constitute an MTTase N-terminal domain. [4Fe-4S] cluster contacts are provided by C12, C49, C83, C157, C161, and C164. Residues 143–370 (RVDGPSAYVS…QQRINQQGFE (228 aa)) enclose the Radical SAM core domain. Residues 373–437 (RRMVGTTQRI…PHSLRGSLLS (65 aa)) enclose the TRAM domain.

The protein belongs to the methylthiotransferase family. MiaB subfamily. In terms of assembly, monomer. It depends on [4Fe-4S] cluster as a cofactor.

The protein localises to the cytoplasm. It carries out the reaction N(6)-dimethylallyladenosine(37) in tRNA + (sulfur carrier)-SH + AH2 + 2 S-adenosyl-L-methionine = 2-methylsulfanyl-N(6)-dimethylallyladenosine(37) in tRNA + (sulfur carrier)-H + 5'-deoxyadenosine + L-methionine + A + S-adenosyl-L-homocysteine + 2 H(+). In terms of biological role, catalyzes the methylthiolation of N6-(dimethylallyl)adenosine (i(6)A), leading to the formation of 2-methylthio-N6-(dimethylallyl)adenosine (ms(2)i(6)A) at position 37 in tRNAs that read codons beginning with uridine. This Stutzerimonas stutzeri (strain A1501) (Pseudomonas stutzeri) protein is tRNA-2-methylthio-N(6)-dimethylallyladenosine synthase.